Here is a 949-residue protein sequence, read N- to C-terminus: MAM domain-containing glycosylphosphatidylinositol anchor protein 2 (949 aa).

Residues 1–25 (MDLVYGLVWLLTVLLEGISGQGVYA) form the signal peptide. Ig-like domains are found at residues 27-127 (PTVR…IRVD) and 134-232 (PVVT…KMVS). Cystine bridges form between C62-C110 and C159-C216. 3 N-linked (GlcNAc...) asparagine glycosylation sites follow: N92, N213, and N237. Ig-like domains lie at 242-328 (PSIK…NIIV), 340-436 (PDPY…VNIS), 442-533 (PNLT…ALVQ), and 540-627 (PAVE…FLVT). Disulfide bonds link C264/C310 and C359/C417. Residues N434, N443, N504, N610, and N703 are each glycosylated (N-linked (GlcNAc...) asparagine). Cystine bridges form between C465-C515 and C561-C611. Residues 638–738 (DTYNPVWQNR…TIRVIKYTGE (101 aa)) form the Fibronectin type-III domain. Residues 739–914 (FHCGFEDGNI…VSIAEGECAK (176 aa)) form the MAM domain. The GPI-anchor amidated aspartate moiety is linked to residue D924. The propeptide at 925–949 (GAVGILVHIWLFPVIILISILSPRR) is removed in mature form.

In terms of assembly, interacts (through the Ig-like domains) with NLGN2.

It is found in the cell membrane. Functionally, may be involved in cell-cell interactions. This is MAM domain-containing glycosylphosphatidylinositol anchor protein 2 (Mdga2) from Mus musculus (Mouse).